Consider the following 272-residue polypeptide: Phosphate import ATP-binding protein PstB (272 aa).

Positions 26–267 (LEIRNLDLRY…PKKRKTEDYI (242 aa)) constitute an ABC transporter domain. Residue 58 to 65 (GPSGCGKS) participates in ATP binding.

This sequence belongs to the ABC transporter superfamily. Phosphate importer (TC 3.A.1.7) family. In terms of assembly, the complex is composed of two ATP-binding proteins (PstB), two transmembrane proteins (PstC and PstA) and a solute-binding protein (PstS).

The protein resides in the cell inner membrane. It catalyses the reaction phosphate(out) + ATP + H2O = ADP + 2 phosphate(in) + H(+). Functionally, part of the ABC transporter complex PstSACB involved in phosphate import. Responsible for energy coupling to the transport system. The chain is Phosphate import ATP-binding protein PstB from Shewanella frigidimarina (strain NCIMB 400).